A 320-amino-acid chain; its full sequence is Acetyl-coenzyme A carboxylase carboxyl transferase subunit alpha (320 aa).

The 255-residue stretch at 41-295 (KIEEKAQQAL…GDAIAAAFAE (255 aa)) folds into the CoA carboxyltransferase C-terminal domain.

It belongs to the AccA family. As to quaternary structure, acetyl-CoA carboxylase is a heterohexamer composed of biotin carboxyl carrier protein (AccB), biotin carboxylase (AccC) and two subunits each of ACCase subunit alpha (AccA) and ACCase subunit beta (AccD).

The protein resides in the cytoplasm. It catalyses the reaction N(6)-carboxybiotinyl-L-lysyl-[protein] + acetyl-CoA = N(6)-biotinyl-L-lysyl-[protein] + malonyl-CoA. Its pathway is lipid metabolism; malonyl-CoA biosynthesis; malonyl-CoA from acetyl-CoA: step 1/1. Its function is as follows. Component of the acetyl coenzyme A carboxylase (ACC) complex. First, biotin carboxylase catalyzes the carboxylation of biotin on its carrier protein (BCCP) and then the CO(2) group is transferred by the carboxyltransferase to acetyl-CoA to form malonyl-CoA. This chain is Acetyl-coenzyme A carboxylase carboxyl transferase subunit alpha, found in Rhodopseudomonas palustris (strain ATCC BAA-98 / CGA009).